Consider the following 138-residue polypeptide: Putative pre-16S rRNA nuclease (138 aa).

This sequence belongs to the YqgF nuclease family.

The protein resides in the cytoplasm. Its function is as follows. Could be a nuclease involved in processing of the 5'-end of pre-16S rRNA. The polypeptide is Putative pre-16S rRNA nuclease (Flavobacterium johnsoniae (strain ATCC 17061 / DSM 2064 / JCM 8514 / BCRC 14874 / CCUG 350202 / NBRC 14942 / NCIMB 11054 / UW101) (Cytophaga johnsonae)).